A 477-amino-acid chain; its full sequence is Probable cytosol aminopeptidase (477 aa).

Lysine 245 and aspartate 250 together coordinate Mn(2+). Residue lysine 257 is part of the active site. Residues aspartate 268, aspartate 327, and glutamate 329 each contribute to the Mn(2+) site. The active site involves arginine 331.

The protein belongs to the peptidase M17 family. The cofactor is Mn(2+).

The protein localises to the cytoplasm. It carries out the reaction Release of an N-terminal amino acid, Xaa-|-Yaa-, in which Xaa is preferably Leu, but may be other amino acids including Pro although not Arg or Lys, and Yaa may be Pro. Amino acid amides and methyl esters are also readily hydrolyzed, but rates on arylamides are exceedingly low.. The catalysed reaction is Release of an N-terminal amino acid, preferentially leucine, but not glutamic or aspartic acids.. In terms of biological role, presumably involved in the processing and regular turnover of intracellular proteins. Catalyzes the removal of unsubstituted N-terminal amino acids from various peptides. The sequence is that of Probable cytosol aminopeptidase from Exiguobacterium sibiricum (strain DSM 17290 / CCUG 55495 / CIP 109462 / JCM 13490 / 255-15).